The sequence spans 421 residues: ATP-dependent RNA helicase RhlB (421 aa).

Positions 9–37 match the Q motif motif; that stretch reads QKFSDFALHPKVVEALEKKGFHNCTPIQA. The Helicase ATP-binding domain maps to 40–219; it reads LPLTLAGRDV…FEQMNNAEYI (180 aa). 53 to 60 provides a ligand contact to ATP; the sequence is AQTGTGKT. A DEAD box motif is present at residues 165–168; it reads DEAD. In terms of domain architecture, Helicase C-terminal spans 245 to 390; that stretch reads RLLQTLIEEE…VSKYNPDALM (146 aa). Positions 392-421 are disordered; that stretch reads DLPKPLRLTRPRTGNGPRRTGAPRNRRRSG. Residues 402-414 show a composition bias toward low complexity; the sequence is PRTGNGPRRTGAP.

It belongs to the DEAD box helicase family. RhlB subfamily. As to quaternary structure, component of the RNA degradosome, which is a multiprotein complex involved in RNA processing and mRNA degradation.

It localises to the cytoplasm. The enzyme catalyses ATP + H2O = ADP + phosphate + H(+). Functionally, DEAD-box RNA helicase involved in RNA degradation. Has RNA-dependent ATPase activity and unwinds double-stranded RNA. The sequence is that of ATP-dependent RNA helicase RhlB from Escherichia fergusonii (strain ATCC 35469 / DSM 13698 / CCUG 18766 / IAM 14443 / JCM 21226 / LMG 7866 / NBRC 102419 / NCTC 12128 / CDC 0568-73).